The sequence spans 103 residues: Small ribosomal subunit protein uS10 (103 aa).

Belongs to the universal ribosomal protein uS10 family. In terms of assembly, part of the 30S ribosomal subunit.

Involved in the binding of tRNA to the ribosomes. The sequence is that of Small ribosomal subunit protein uS10 from Escherichia coli O127:H6 (strain E2348/69 / EPEC).